A 549-amino-acid chain; its full sequence is Glucose-6-phosphate isomerase (549 aa).

Glutamate 353 serves as the catalytic Proton donor. Catalysis depends on residues histidine 384 and lysine 513.

It belongs to the GPI family.

It is found in the cytoplasm. The enzyme catalyses alpha-D-glucose 6-phosphate = beta-D-fructose 6-phosphate. Its pathway is carbohydrate biosynthesis; gluconeogenesis. The protein operates within carbohydrate degradation; glycolysis; D-glyceraldehyde 3-phosphate and glycerone phosphate from D-glucose: step 2/4. Catalyzes the reversible isomerization of glucose-6-phosphate to fructose-6-phosphate. This is Glucose-6-phosphate isomerase from Brucella abortus (strain S19).